A 699-amino-acid polypeptide reads, in one-letter code: MAEAEAQFPPLQDGDDFFHVGSDRCSEELRDVKQVLFQEEDDSASDYGSYKRLGKVTSRTVPAGNMLFPDLFQTNNLLFYERFETYKDYMLGDCKPSEVKEFIAEYLEKALKPSGWNAIWHTDVFDVLVEVTDVEFSSLNAIVRLSEPFLCESHVSSIALESIKDLLDVKDQRVPLQEIRVVFDESGLYNQTALAIEHLRFFYQQIWRPWDEEEEDYFDYFVRCVEPRLRLHYDILEDRIPSGLVAEYSSLLLQCEEVYMQFTNLRNNLSNKDSDSESELDNVSMVEGMKMDNEMENLKRKLKLIENPLLRYLFCYQRNSGCHNVQAKGPRPNGGKVIHVVSTSMSILTLQCLTRERLQPESGNKDLEIQFHRDPLEAVNACYEGDLVIICPGLYAVYGLINIMDSIEIEGYGLPDDVVIEKMGKGDTFVACSGAHIKISNVKFVQHEAVEGIITIHSGKTELDNCVLQCETTGVTVKKSAELLMKYSDLYGAKGAGMEIYPGSKCTLIGNGIHHCRDGILIKDFIDVVCEIPKITMENNVIHNNEGYAVVLVKPSLDIEKNSHNEELEGGHLDDDDKMIEEQTSSNILQPNLNKAMGVEDKAVEHTNNLEKDQGNLAIAKEEVECEYAIDCEEAEGNQVIATELVANTRRKTKLHKKRLSTLGIVTADDKLTSQEIFVSIVGNQFKRNGKGTFGTFLF.

PbH1 repeat units lie at residues 480–502 (SAEL…EIYP), 503–524 (GSKC…LIKD), and 532–554 (IPKI…VLVK). A coiled-coil region spans residues 603 to 627 (AVEHTNNLEKDQGNLAIAKEEVECE).

The protein resides in the midbody. It is found in the cytoplasm. Its subcellular location is the cytoskeleton. It localises to the spindle. May play a role in signaling pathways governing cellular proliferation. This is SHC SH2 domain-binding protein 1 homolog A (shcbp1-a) from Xenopus laevis (African clawed frog).